The primary structure comprises 121 residues: Small ribosomal subunit protein bS6 (121 aa).

This sequence belongs to the bacterial ribosomal protein bS6 family.

Functionally, binds together with bS18 to 16S ribosomal RNA. This is Small ribosomal subunit protein bS6 (rpsF) from Rickettsia prowazekii (strain Madrid E).